We begin with the raw amino-acid sequence, 1368 residues long: DNA-directed RNA polymerase subunit beta (1368 aa).

The protein belongs to the RNA polymerase beta chain family. The RNAP catalytic core consists of 2 alpha, 1 beta, 1 beta' and 1 omega subunit. When a sigma factor is associated with the core the holoenzyme is formed, which can initiate transcription.

The enzyme catalyses RNA(n) + a ribonucleoside 5'-triphosphate = RNA(n+1) + diphosphate. Functionally, DNA-dependent RNA polymerase catalyzes the transcription of DNA into RNA using the four ribonucleoside triphosphates as substrates. This chain is DNA-directed RNA polymerase subunit beta, found in Cupriavidus taiwanensis (strain DSM 17343 / BCRC 17206 / CCUG 44338 / CIP 107171 / LMG 19424 / R1) (Ralstonia taiwanensis (strain LMG 19424)).